A 187-amino-acid polypeptide reads, in one-letter code: Phosphatidylethanolamine-binding protein 1 (187 aa).

Serine 6 and serine 13 each carry phosphoserine. Phosphothreonine is present on threonine 42. 4 positions are modified to phosphoserine: serine 52, serine 54, serine 98, and serine 153. Residues 93–134 (KGNDISSGTVLSDYVGSGPPKGTGLHRYVWLVYEQDRPLKCD) form an interaction with RAF1 region.

Belongs to the phosphatidylethanolamine-binding protein family. Has a tendency to form dimers by disulfide cross-linking. Interacts with RAF1 and this interaction is enhanced if RAF1 is phosphorylated on residues 'Ser-338', 'Ser-339', 'Tyr-340' and 'Tyr-341'. Interacts with ALOX15; in response to IL13/interleukin-13, prevents the interaction of PEBP1 with RAF1 to activate the ERK signaling cascade.

The protein resides in the cytoplasm. Functionally, binds ATP, opioids and phosphatidylethanolamine. Has lower affinity for phosphatidylinositol and phosphatidylcholine. Serine protease inhibitor which inhibits thrombin, neuropsin and chymotrypsin but not trypsin, tissue type plasminogen activator and elastase. Inhibits the kinase activity of RAF1 by inhibiting its activation and by dissociating the RAF1/MEK complex and acting as a competitive inhibitor of MEK phosphorylation. Its function is as follows. HCNP may be involved in the function of the presynaptic cholinergic neurons of the central nervous system. HCNP increases the production of choline acetyltransferase but not acetylcholinesterase. Seems to be mediated by a specific receptor. The protein is Phosphatidylethanolamine-binding protein 1 (PEBP1) of Pongo abelii (Sumatran orangutan).